A 456-amino-acid chain; its full sequence is DnaJ homolog dnj-10 (456 aa).

Residues 44-108 (DYYKTLGVDK…TKRQEYDAYG (65 aa)) form the J domain. The CR-type zinc-finger motif lies at 178–257 (GATKNVSVNV…CEGEGQTVQR (80 aa)). CXXCXGXG motif repeat units follow at residues 208 to 215 (CPYCNGTG), 231 to 238 (CNRCRGSG), and 245 to 252 (CQECEGEG). Residues 395-429 (KGLEKNQKTEEKETKKNEEKKSEGASESQKRRSEP) are compositionally biased toward basic and acidic residues. The disordered stretch occupies residues 395-443 (KGLEKNQKTEEKETKKNEEKKSEGASESQKRRSEPVAENAETIDENQEN).

The polypeptide is DnaJ homolog dnj-10 (dnj-10) (Caenorhabditis elegans).